We begin with the raw amino-acid sequence, 119 residues long: Promotilin (119 aa).

The N-terminal stretch at Met1 to Ala25 is a signal peptide. Residues Glu40–Glu72 form a disordered region.

This sequence belongs to the motilin family.

The protein localises to the secreted. Plays an important role in the regulation of interdigestive gastrointestinal motility and indirectly causes rhythmic contraction of duodenal and colonic smooth muscle. The sequence is that of Promotilin (MLN) from Sus scrofa (Pig).